Reading from the N-terminus, the 138-residue chain is Extracellular glycoprotein lacritin (138 aa).

A signal peptide spans 1-19 (MKFTTLLFLAAVAGALVYA). The interval 20–79 (EDASSDSTGADPAQEAGTSKPNEEISGPAEPASPPETTTTAQETSAAAVQGTAKVTSSRQ) is disordered. The span at 43–67 (EISGPAEPASPPETTTTAQETSAAA) shows a compositional bias: low complexity. An N-linked (GlcNAc...) asparagine glycan is attached at asparagine 119.

As to expression, expressed in secretory granules of many acinar cells in lacrimal gland and in scattered acinar cells of salivary glands.

The protein resides in the secreted. Its function is as follows. Modulates secretion by lacrimal acinar cells. The polypeptide is Extracellular glycoprotein lacritin (LACRT) (Homo sapiens (Human)).